Consider the following 245-residue polypeptide: uncharacterized protein (245 aa).

To M.tuberculosis Rv2927c.

This is an uncharacterized protein from Mycobacterium leprae (strain TN).